The primary structure comprises 280 residues: Probable endonuclease 4 (280 aa).

Zn(2+) is bound by residues H69, H109, E145, D179, H182, H216, D229, H231, and E261.

The protein belongs to the AP endonuclease 2 family. Requires Zn(2+) as cofactor.

It catalyses the reaction Endonucleolytic cleavage to 5'-phosphooligonucleotide end-products.. Functionally, endonuclease IV plays a role in DNA repair. It cleaves phosphodiester bonds at apurinic or apyrimidinic (AP) sites, generating a 3'-hydroxyl group and a 5'-terminal sugar phosphate. This is Probable endonuclease 4 from Pelodictyon phaeoclathratiforme (strain DSM 5477 / BU-1).